We begin with the raw amino-acid sequence, 89 residues long: Small ribosomal subunit protein uS17 (89 aa).

The protein belongs to the universal ribosomal protein uS17 family. Part of the 30S ribosomal subunit.

Functionally, one of the primary rRNA binding proteins, it binds specifically to the 5'-end of 16S ribosomal RNA. The protein is Small ribosomal subunit protein uS17 of Chlorobaculum tepidum (strain ATCC 49652 / DSM 12025 / NBRC 103806 / TLS) (Chlorobium tepidum).